The following is a 165-amino-acid chain: UPF0114 protein in repA1-repA2 intergenic region (165 aa).

3 helical membrane passes run 10–32, 53–75, and 134–156; these read YASR…LLTL, LVLV…MVMF, and DQIM…MACI.

The protein belongs to the UPF0114 family.

Its subcellular location is the cell membrane. The protein is UPF0114 protein in repA1-repA2 intergenic region of Buchnera aphidicola subsp. Baizongia pistaciae (strain Bp).